The following is a 509-amino-acid chain: Zinc finger CCCH-type with G patch domain-containing protein (509 aa).

The segment at 155-178 adopts a C3H1-type zinc-finger fold; it reads PCNYYLEGECRFDEIRCRYSHGAL. Residues 254 to 277 form a disordered region; that stretch reads EDELTSEDSSSSPHDESSDEIDSD. The 47-residue stretch at 310–356 folds into the G-patch domain; it reads TRGIGSKLMEKMGYIHGTGLGSEGRGIVTPVSAQILPQGRSLDACME. The tract at residues 407–430 is disordered; that stretch reads LGGGESRHQGDQAAKKAKTNDLQQ. Over residues 411–420 the composition is skewed to basic and acidic residues; that stretch reads ESRHQGDQAA.

Its subcellular location is the nucleus. Functionally, transcription repressor. In Drosophila pseudoobscura pseudoobscura (Fruit fly), this protein is Zinc finger CCCH-type with G patch domain-containing protein.